A 196-amino-acid chain; its full sequence is Pycsar effector protein GmPycTM (196 aa).

3 consecutive transmembrane segments (helical) span residues 34 to 54 (ISFS…SGII), 82 to 102 (ITTI…TYLF), and 176 to 196 (VNWL…FLFL).

The protein localises to the cell inner membrane. Functionally, pycsar (pyrimidine cyclase system for antiphage resistance) provides immunity against bacteriophage. The pyrimidine cyclase (PycC) synthesizes cyclic nucleotides in response to infection; these serve as specific second messenger signals. The signals activate the adjacent effector, leading to bacterial cell death and abortive phage infection. A clade C Pycsar system. In terms of biological role, the effector gene of a two-gene Pycsar system. Expression of this and adjacent uridylate cyclase GmPycC (AC P0DV42) probably confers resistance to bacteriophage. The genes are probably only expressed in response to bacteriophage infection. Probably only responds to cUMP (produced by its cognate NTP cyclase), acts by impairing membrane integrity. In Gulbenkiania mobilis, this protein is Pycsar effector protein GmPycTM.